Here is a 360-residue protein sequence, read N- to C-terminus: Phospho-N-acetylmuramoyl-pentapeptide-transferase (360 aa).

Helical transmembrane passes span 26-46 (AIVSLLTALFISLWMGPRMIA), 72-92 (PTMGGIMILTAITVSVLLWAY), 94-114 (SNPYVWCVLTVLIGYGIIGFV), 132-152 (WKYFWMSVIALGVAFALYLAG), 168-188 (VMPQLGLLYILLAYFVIVGTG), 199-219 (GLAIMPTVFVAAGFALVAWAT), 236-256 (AGELVIVCTAIVGAGLGFLWF), 263-283 (VFMGDVGSLALGGALGIIAVL), 288-308 (FLLVIMGGVFVVETLSVILQV), and 338-358 (VIVRFWIISLMLVLIGLATLK).

This sequence belongs to the glycosyltransferase 4 family. MraY subfamily. Mg(2+) is required as a cofactor.

The protein resides in the cell inner membrane. It carries out the reaction UDP-N-acetyl-alpha-D-muramoyl-L-alanyl-gamma-D-glutamyl-meso-2,6-diaminopimeloyl-D-alanyl-D-alanine + di-trans,octa-cis-undecaprenyl phosphate = di-trans,octa-cis-undecaprenyl diphospho-N-acetyl-alpha-D-muramoyl-L-alanyl-D-glutamyl-meso-2,6-diaminopimeloyl-D-alanyl-D-alanine + UMP. Its pathway is cell wall biogenesis; peptidoglycan biosynthesis. Catalyzes the initial step of the lipid cycle reactions in the biosynthesis of the cell wall peptidoglycan: transfers peptidoglycan precursor phospho-MurNAc-pentapeptide from UDP-MurNAc-pentapeptide onto the lipid carrier undecaprenyl phosphate, yielding undecaprenyl-pyrophosphoryl-MurNAc-pentapeptide, known as lipid I. This chain is Phospho-N-acetylmuramoyl-pentapeptide-transferase, found in Klebsiella pneumoniae (strain 342).